The sequence spans 324 residues: Phospho-N-acetylmuramoyl-pentapeptide-transferase (324 aa).

The next 10 membrane-spanning stretches (helical) occupy residues 5-25, 57-77, 81-101, 117-137, 147-167, 176-196, 203-223, 227-247, 250-270, and 302-322; these read AIVI…PLFI, IMIL…IAGL, TYLL…DDMI, FIGQ…SGFS, WSVD…VGGS, LDGL…VLAW, VAVF…FNAH, VFMG…VAVL, LELL…SVII, and IVVT…YIEV.

It belongs to the glycosyltransferase 4 family. MraY subfamily. It depends on Mg(2+) as a cofactor.

The protein localises to the cell membrane. It carries out the reaction UDP-N-acetyl-alpha-D-muramoyl-L-alanyl-gamma-D-glutamyl-meso-2,6-diaminopimeloyl-D-alanyl-D-alanine + di-trans,octa-cis-undecaprenyl phosphate = di-trans,octa-cis-undecaprenyl diphospho-N-acetyl-alpha-D-muramoyl-L-alanyl-D-glutamyl-meso-2,6-diaminopimeloyl-D-alanyl-D-alanine + UMP. The protein operates within cell wall biogenesis; peptidoglycan biosynthesis. In terms of biological role, catalyzes the initial step of the lipid cycle reactions in the biosynthesis of the cell wall peptidoglycan: transfers peptidoglycan precursor phospho-MurNAc-pentapeptide from UDP-MurNAc-pentapeptide onto the lipid carrier undecaprenyl phosphate, yielding undecaprenyl-pyrophosphoryl-MurNAc-pentapeptide, known as lipid I. The polypeptide is Phospho-N-acetylmuramoyl-pentapeptide-transferase (Geobacillus kaustophilus (strain HTA426)).